Here is a 289-residue protein sequence, read N- to C-terminus: Glucosamine-6-phosphate deaminase 1 (289 aa).

Residue Lys-64 is modified to N6-acetyllysine. Catalysis depends on Asp-72, which acts as the Proton acceptor; for enolization step. Catalysis depends on Asp-141, which acts as the For ring-opening step. His-143 (proton acceptor; for ring-opening step) is an active-site residue. Residue Glu-148 is the For ring-opening step of the active site. Thr-161 carries the phosphothreonine modification.

Belongs to the glucosamine/galactosamine-6-phosphate isomerase family. In terms of assembly, homohexamer. As to expression, at the equatorial segment of the sperm head.

It localises to the cytoplasm. The catalysed reaction is alpha-D-glucosamine 6-phosphate + H2O = beta-D-fructose 6-phosphate + NH4(+). It functions in the pathway nucleotide-sugar biosynthesis; UDP-N-acetyl-alpha-D-glucosamine biosynthesis; alpha-D-glucosamine 6-phosphate from D-fructose 6-phosphate: step 1/1. Allosterically activated by N-acetylglucosamine-6-phosphate (GlcNAc6P). In terms of biological role, catalyzes the reversible conversion of alpha-D-glucosamine 6-phosphate (GlcN-6P) into beta-D-fructose 6-phosphate (Fru-6P) and ammonium ion, a regulatory reaction step in de novo uridine diphosphate-N-acetyl-alpha-D-glucosamine (UDP-GlcNAc) biosynthesis via hexosamine pathway. Deamination is coupled to aldo-keto isomerization mediating the metabolic flux from UDP-GlcNAc toward Fru-6P. At high ammonium level can drive amination and isomerization of Fru-6P toward hexosamines and UDP-GlcNAc synthesis. Has a role in fine tuning the metabolic fluctuations of cytosolic UDP-GlcNAc and their effects on hyaluronan synthesis that occur during tissue remodeling. Seems to trigger calcium oscillations in mammalian eggs. These oscillations serve as the essential trigger for egg activation and early development of the embryo. In Mesocricetus auratus (Golden hamster), this protein is Glucosamine-6-phosphate deaminase 1.